The primary structure comprises 289 residues: Mas-related G-protein coupled receptor member G (289 aa).

Residues 1 to 13 (MLSIFNIWGTFNR) are Extracellular-facing. Residues 14–34 (VLFFLSLTVSLAGLAGNTLLL) form a helical membrane-spanning segment. At 35–49 (WHLGLRIKKGPFNTY) the chain is on the cytoplasmic side. A helical membrane pass occupies residues 50–70 (LLHLAAADFLFLSCQVGFSIA). Over 71–80 (KIASGYEDTL) the chain is Extracellular. The chain crosses the membrane as a helical span at residues 81 to 101 (YFPVTFLWFAVGLWLLAAFIV). The Cytoplasmic segment spans residues 102–123 (DCCLSYMFPSFCGPNCRPRYTS). A helical membrane pass occupies residues 124–144 (FVLCLVIWALTMLAVLLPANA). Residues 145-164 (CGLLYNRMSLLVCLKYHWVS) are Extracellular-facing. The chain crosses the membrane as a helical span at residues 165-185 (VVWLGVLASTACGASMFLLVF). Over 186-200 (GNCCSSQPPSKFCKL) the chain is Cytoplasmic. A helical transmembrane segment spans residues 201–221 (AQCSGILLFFCRLPLVFYWCL). R222 is a topological domain (extracellular). The helical transmembrane segment at 223-243 (PVIKFLLPFFFPLATLLACID) threads the bilayer. Residues 244-289 (SSAKPLLYYLKGRQLRKEPLQVALNRALGEESQSSSGGISLPMSRV) are Cytoplasmic-facing.

It belongs to the G-protein coupled receptor 1 family. Mas subfamily.

Its subcellular location is the cell membrane. Functionally, orphan receptor. May regulate nociceptor function and/or development, including the sensation or modulation of pain. The polypeptide is Mas-related G-protein coupled receptor member G (Mrgprg) (Rattus norvegicus (Rat)).